A 149-amino-acid chain; its full sequence is Transcriptional regulator MraZ (149 aa).

SpoVT-AbrB domains follow at residues 9 to 52 (AYSY…PRAQ) and 82 to 125 (AQEV…DRAR).

Belongs to the MraZ family. Forms oligomers.

It is found in the cytoplasm. The protein localises to the nucleoid. In Treponema pallidum subsp. pallidum (strain SS14), this protein is Transcriptional regulator MraZ.